An 83-amino-acid polypeptide reads, in one-letter code: Exodeoxyribonuclease 7 small subunit (83 aa).

Residues 1–25 (MQDELFETEKAPPKNAKNAPKKSFE) form a disordered region.

This sequence belongs to the XseB family. Heterooligomer composed of large and small subunits.

It localises to the cytoplasm. The catalysed reaction is Exonucleolytic cleavage in either 5'- to 3'- or 3'- to 5'-direction to yield nucleoside 5'-phosphates.. Its function is as follows. Bidirectionally degrades single-stranded DNA into large acid-insoluble oligonucleotides, which are then degraded further into small acid-soluble oligonucleotides. In Helicobacter pylori (strain P12), this protein is Exodeoxyribonuclease 7 small subunit.